A 364-amino-acid chain; its full sequence is Palmitoyltransferase ZDHHC9 (364 aa).

Over 1–35 (MSVMVVRKKVTRKWEKLPGRNTFCCDGRVMMARQK) the chain is Cytoplasmic. A helical membrane pass occupies residues 36 to 56 (GIFYLTLFLILGTCTLFFAFE). Topologically, residues 57 to 63 (CRYLAVQ) are lumenal. A helical membrane pass occupies residues 64–84 (LSPAIPVFAAMLFLFSMATLL). Residues 85-183 (RTSFSDPGVI…NCVGKRNYRY (99 aa)) are Cytoplasmic-facing. The DHHC domain maps to 139–189 (KYCYTCKIFRPPRASHCSICDNCVERFDHHCPWVGNCVGKRNYRYFYLFIL). Residue Cys169 is the S-palmitoyl cysteine intermediate of the active site. The helical transmembrane segment at 184 to 204 (FYLFILSLSLLTIYVFAFNIV) threads the bilayer. The Lumenal portion of the chain corresponds to 205-228 (YVALKSLKIGFLETLKETPGTVLE). Residues 229–249 (VLICFFTLWSVVGLTGFHTFL) traverse the membrane as a helical segment. At 250 to 364 (VALNQTTNED…PPQEAAEAEK (115 aa)) the chain is on the cytoplasmic side. Residues 303 to 364 (PLEESGSRPP…PPQEAAEAEK (62 aa)) are disordered. A compositionally biased stretch (polar residues) spans 310–323 (RPPSTQETSSSLLP). Residues 346-356 (EMPPPEPPEPP) show a composition bias toward pro residues.

It belongs to the DHHC palmitoyltransferase family. ERF2/ZDHHC9 subfamily. In terms of assembly, interacts with GOLGA7. Highly expressed in kidney, skeletal muscle, brain, lung and liver. Absent in thymus, spleen and leukocytes.

Its subcellular location is the endoplasmic reticulum membrane. The protein localises to the golgi apparatus membrane. The catalysed reaction is L-cysteinyl-[protein] + hexadecanoyl-CoA = S-hexadecanoyl-L-cysteinyl-[protein] + CoA. Palmitoyltransferase that catalyzes the addition of palmitate onto various protein substrates, such as ADRB2, GSDMD, HRAS, NRAS and CGAS. The ZDHHC9-GOLGA7 complex is a palmitoyltransferase specific for HRAS and NRAS. May have a palmitoyltransferase activity toward the beta-2 adrenergic receptor/ADRB2 and therefore regulate G protein-coupled receptor signaling. Acts as a regulator of innate immunity by catalyzing palmitoylation of CGAS, thereby promoting CGAS homodimerization and cyclic GMP-AMP synthase activity. Activates pyroptosis by catalyzing palmitoylation of gasdermin-D (GSDMD), thereby promoting membrane translocation and pore formation of GSDMD. Functionally, (Microbial infection) Through a sequential action with ZDHHC20, rapidly and efficiently palmitoylates SARS coronavirus-2/SARS-CoV-2 spike protein following its synthesis in the endoplasmic reticulum (ER). In the infected cell, promotes spike biogenesis by protecting it from premature ER degradation, increases half-life and controls the lipid organization of its immediate membrane environment. Once the virus has formed, spike palmitoylation controls fusion with the target cell. This Homo sapiens (Human) protein is Palmitoyltransferase ZDHHC9.